A 930-amino-acid chain; its full sequence is A disintegrin and metalloproteinase with thrombospondin motifs 5 (930 aa).

The signal sequence occupies residues 1–16 (MLLGWASLLLCAFRLP). The propeptide occupies 17–261 (LAAVGPAATP…PQTWWRRRRR (245 aa)). Disordered stretches follow at residues 24–69 (ATPA…QRRR) and 206–231 (RASC…PSGR). The span at 31–42 (AGQPPTAAAAAQ) shows a compositional bias: low complexity. A compositionally biased stretch (basic and acidic residues) spans 46 to 59 (RQGEEVQERAEPPG). Positions 207–214 (ASCETPAS) match the Cysteine switch motif. Zn(2+) is bound at residue Cys209. Residues 267 to 476 (RQVELLLVAD…GHGNCLLDLP (210 aa)) form the Peptidase M12B domain. Cystine bridges form between Cys342–Cys394, Cys371–Cys376, Cys388–Cys471, Cys426–Cys455, Cys497–Cys519, Cys508–Cys529, Cys514–Cys548, and Cys542–Cys553. His410 is a Zn(2+) binding site. The active site involves Glu411. Residues His414 and His420 each contribute to the Zn(2+) site. The 82-residue stretch at 485–566 (ELPGQTYDAT…TKKKYYSTSS (82 aa)) folds into the Disintegrin domain. A glycan (N-linked (GlcNAc...) asparagine) is linked at Asn498. The region spanning 567-622 (HGNWGSWGSWGQCSRSCGGGVQFAYRHCNNPAPRNNGRYCTGKRAIYRSCSLMPCP) is the TSP type-1 1 domain. Trp570 and Trp573 each carry a C-linked (Man) tryptophan glycan. Intrachain disulfides connect Cys579–Cys616, Cys583–Cys621, and Cys594–Cys606. Ser582 is a glycosylation site (O-linked (Fuc...) serine). 3 N-linked (GlcNAc...) asparagine glycosylation sites follow: Asn728, Asn802, and Asn807. Residues 732–874 (TKIVGTFNKK…HGSNKVGSHT (143 aa)) are spacer. The region spanning 875-929 (SQPQWVTGPWLACSRTCDTGWHTRTVQCQDGNRKLAKGCPLSQRPSAFKQCLLKK) is the TSP type-1 2 domain.

Zn(2+) serves as cofactor. In terms of processing, the precursor is cleaved by furin and PCSK7 outside of the cell. Glycosylated. Can be O-fucosylated by POFUT2 on a serine or a threonine residue found within the consensus sequence C1-X(2)-(S/T)-C2-G of the TSP type-1 repeat domains where C1 and C2 are the first and second cysteine residue of the repeat, respectively. Fucosylated repeats can then be further glycosylated by the addition of a beta-1,3-glucose residue by the glucosyltransferase, B3GALTL. Fucosylation mediates the efficient secretion of ADAMTS family members. Can also be C-glycosylated with one or two mannose molecules on tryptophan residues within the consensus sequence W-X-X-W of the TPRs, and N-glycosylated. These other glycosylations can also facilitate secretion. In terms of tissue distribution, expressed at low level in placenta primarily but also detected in heart and brain, cervix, uterus, bladder, esophagus, rib cartilage, chondroblastoma, fibrous tissue and a joint capsule from an arthritic patient.

It is found in the secreted. The protein resides in the extracellular space. It localises to the extracellular matrix. Its function is as follows. Metalloproteinase that plays an important role in connective tissue organization, development, inflammation and cell migration. Extracellular matrix (ECM) degrading enzyme that show proteolytic activity toward the hyalectan group of chondroitin sulfate proteoglycans (CSPGs) including ACAN, VCAN, BCAN and NCAN. Cleavage within the hyalectans occurs at Glu-Xaa recognition motifs. Plays a role in embryonic development, including limb and cardiac morphogenesis, and skeletal muscle development through its VCAN remodeling properties. Cleaves VCAN in the pericellular matrix surrounding myoblasts, facilitating myoblast contact and fusion which is required for skeletal muscle development and regeneration. Participates in development of brown adipose tissue and browning of white adipose tissue. Plays an important role for T-lymphocyte migration from draining lymph nodes following viral infection. This is A disintegrin and metalloproteinase with thrombospondin motifs 5 (ADAMTS5) from Homo sapiens (Human).